The primary structure comprises 108 residues: Complement inhibitor CirpT2 (108 aa).

The signal sequence occupies residues 1–19 (MRTLVASLCVFAVFSAVCC). 4 disulfide bridges follow: cysteine 40–cysteine 64, cysteine 59–cysteine 98, cysteine 76–cysteine 99, and cysteine 85–cysteine 104.

This sequence belongs to the CirpT family. In terms of tissue distribution, expressed in salivary glands.

It is found in the secreted. Complement inhibitor. Prevents complement-mediated activation of C5 by sterically preventing direct binding of C5 to its convertase (binding with domains MG4 and MG5). Binds C5 at a different binding site than the other tick complement inhibitors OmCI and RaCI3, and the drug eculizumab. Inhibits the complement in human, rat and guinea pig, and also shows a reduced inhibition in rabbit and pig. In Dermacentor andersoni (Rocky mountain wood tick), this protein is Complement inhibitor CirpT2.